The following is a 1520-amino-acid chain: Myosin-5 (1520 aa).

The region spanning 7-56 (IVGSHVWVEDPHLAWIDGEVTRIDGINVHVKTKKGKTVVTNVYFPKDTEA) is the Myosin N-terminal SH3-like domain. Residues 59–729 (GGVDDMTKLS…QMAELDARRA (671 aa)) form the Myosin motor domain. ATP contacts are provided by residues 153–160 (GESGAGKT) and 206–214 (NNNSSRFGK). Actin-binding stretches follow at residues 492–526 (LIEK…FQTF), 528–551 (EHER…AGEV), 586–610 (FHAL…KQQL), and 610–632 (LHSL…KPNN). IQ domains lie at 732–761 (LGNA…AAIV), 755–784 (IRNA…EAAA), 780–809 (IEAA…STIV), 803–832 (TRSS…RKAA), 828–857 (QRKA…AAIV), and 851–880 (LQKA…AARD). Positions 881–1047 (TGALKDAKNK…ESENKVLRQQ (167 aa)) form a coiled coil. A disordered region spans residues 1062–1100 (PKTTIIQRTPEKDTFSNGETTQLQEPETEDRPQKSLNQK). Positions 1076-1086 (FSNGETTQLQE) are enriched in polar residues. One can recognise a Dilute domain in the interval 1148–1463 (NRIIETIASA…IATMRAEVSD (316 aa)).

It belongs to the TRAFAC class myosin-kinesin ATPase superfamily. Myosin family. Plant myosin class XI subfamily. As to quaternary structure, homodimer. Interacts with MYOB1 and MYOB2. Interacts with PHOX1.

Its subcellular location is the cytoplasm. Myosin heavy chain that is required for the cell cycle-regulated transport of various organelles and proteins for their segregation. Functions by binding with its tail domain to receptor proteins on organelles and exerting force with its N-terminal motor domain against actin filaments, thereby transporting its cargo along polarized actin cables. Contributes to the trafficking of Golgi stacks, mitochondria and peroxisomes. Required for development of pavement cells, trichomes, and stigmatic papillae. The protein is Myosin-5 (XI-1) of Arabidopsis thaliana (Mouse-ear cress).